The chain runs to 122 residues: Large ribosomal subunit protein uL14 (122 aa).

The protein belongs to the universal ribosomal protein uL14 family. In terms of assembly, part of the 50S ribosomal subunit. Forms a cluster with proteins L3 and L19. In the 70S ribosome, L14 and L19 interact and together make contacts with the 16S rRNA in bridges B5 and B8.

Its function is as follows. Binds to 23S rRNA. Forms part of two intersubunit bridges in the 70S ribosome. This Picosynechococcus sp. (strain ATCC 27264 / PCC 7002 / PR-6) (Agmenellum quadruplicatum) protein is Large ribosomal subunit protein uL14.